A 256-amino-acid polypeptide reads, in one-letter code: Probable septum site-determining protein MinC (256 aa).

A disordered region spans residues 105-143; it reads RRGATAKPEPADEAEPPVAAAAAEAVPEPAPELAPSAPT. Residues 120–142 are compositionally biased toward low complexity; sequence PPVAAAAAEAVPEPAPELAPSAP.

This sequence belongs to the MinC family. As to quaternary structure, interacts with MinD and FtsZ.

Cell division inhibitor that blocks the formation of polar Z ring septums. Rapidly oscillates between the poles of the cell to destabilize FtsZ filaments that have formed before they mature into polar Z rings. Prevents FtsZ polymerization. The polypeptide is Probable septum site-determining protein MinC (Burkholderia vietnamiensis (strain G4 / LMG 22486) (Burkholderia cepacia (strain R1808))).